A 466-amino-acid polypeptide reads, in one-letter code: Replication termination factor 1 (466 aa).

2 DNA-binding domain regions span residues 94 to 249 (RDYT…LRRK) and 250 to 421 (YNPF…KKTL). HTH myb-type domains are found at residues 251-304 (NPFK…QPGE) and 305-363 (INRS…SRDI). 2 consecutive DNA-binding regions (H-T-H motif) follow at residues 278–300 (WSLI…RDYI) and 336–359 (WSLI…YTLI).

It localises to the nucleus. In terms of biological role, mediates site-specific replication termination at the polar replication barrier RTS1, a barrier which ensures that replication of the mat1 locus in S.pombe occurs in the centromere-proximal direction. This chain is Replication termination factor 1 (rtf1), found in Schizosaccharomyces pombe (strain 972 / ATCC 24843) (Fission yeast).